The chain runs to 112 residues: MTGKTVTRADLAESVFRKVGLSRTESAELVETVIDEICNAIVRGETVKLSSFATFQVRDKNERIGRNPKTGEEVPISPRRVMTFKASNVLKTRILKSHVARKIKLKPLNPAP.

This sequence belongs to the bacterial histone-like protein family. As to quaternary structure, heterodimer of an alpha and a beta chain.

Its function is as follows. This protein is one of the two subunits of integration host factor, a specific DNA-binding protein that functions in genetic recombination as well as in transcriptional and translational control. This is Integration host factor subunit alpha from Rhizobium johnstonii (strain DSM 114642 / LMG 32736 / 3841) (Rhizobium leguminosarum bv. viciae).